The sequence spans 218 residues: Embryonic polyadenylate-binding protein 2-A (218 aa).

The span at 1–16 (MSERVSEEPGLDKGDG) shows a compositional bias: basic and acidic residues. Disordered regions lie at residues 1 to 26 (MSER…DDPE) and 169 to 218 (RTNM…NHPY). The region spanning 93 to 170 (RSVYVGNVDY…RTIKVLPKRT (78 aa)) is the RRM domain. Positions 205–218 (FRGCGRPGPLNHPY) are enriched in low complexity.

Its subcellular location is the cytoplasm. In terms of biological role, binds the poly(A) tail of mRNA. Unable to interact with the cap-binding complex and is therefore unlikely to be involved in translation initiation. This chain is Embryonic polyadenylate-binding protein 2-A (Pabpn1l-a), found in Xenopus laevis (African clawed frog).